The chain runs to 260 residues: Global transcriptional regulator CodY (260 aa).

The GAF domain stretch occupies residues 1-159 (MPNLLQKTRK…SSTVVGIQLL (159 aa)). Residues 207–226 (ASVIADRIGITRSVIVNALR) constitute a DNA-binding region (H-T-H motif).

It belongs to the CodY family.

The protein localises to the cytoplasm. Its function is as follows. DNA-binding global transcriptional regulator which is involved in the adaptive response to starvation and acts by directly or indirectly controlling the expression of numerous genes in response to nutrient availability. During rapid exponential growth, CodY is highly active and represses genes whose products allow adaptation to nutrient depletion. The chain is Global transcriptional regulator CodY from Streptococcus equi subsp. zooepidemicus (strain MGCS10565).